Reading from the N-terminus, the 633-residue chain is Pollen receptor-like kinase 3 (633 aa).

A signal peptide spans 1–19 (MTAVLFLCFLLICFSFTPS). Residues Asn22 and Asn37 are each glycosylated (N-linked (GlcNAc...) asparagine). Cys53 and Cys62 are oxidised to a cystine. LRR repeat units lie at residues 90–115 (LPNL…KLPG), 117–137 (KSLL…FFKE), 138–162 (TPQL…LMQL), 163–186 (AGLE…TDGN), and 188–210 (VLKS…ISDR). Asn123 is a glycosylation site (N-linked (GlcNAc...) asparagine). An intrachain disulfide couples Cys224 to Cys232. The N-linked (GlcNAc...) asparagine glycan is linked to Asn246. A helical membrane pass occupies residues 249-269 (AKAIFMVILFLLIFLFVVAII). Over residues 294–314 (VEVRVPDSIKKPIDSSKKRSN) the composition is skewed to basic and acidic residues. The disordered stretch occupies residues 294-339 (VEVRVPDSIKKPIDSSKKRSNAEGSSKKGSSHNGKGAGGGPGSGMG). Positions 328–338 (KGAGGGPGSGM) are enriched in gly residues. The region spanning 358–633 (KAAAEVLGNG…IVRRIERVTL (276 aa)) is the Protein kinase domain. Residues 364–372 (LGNGSLGSA) and Lys386 contribute to the ATP site. Ser438 carries the post-translational modification Phosphoserine. A Phosphothreonine modification is found at Thr458. Ser535 carries the phosphoserine modification.

It belongs to the protein kinase superfamily. Ser/Thr protein kinase family. Interacts in vitro with ROPGEF1 (via PRONE domain). Interacts with PRK6. In terms of tissue distribution, expressed in pollen and/or in flowers, but not in leaves.

The protein resides in the membrane. The catalysed reaction is L-seryl-[protein] + ATP = O-phospho-L-seryl-[protein] + ADP + H(+). It carries out the reaction L-threonyl-[protein] + ATP = O-phospho-L-threonyl-[protein] + ADP + H(+). Its activity is regulated as follows. The phosphorylation activity is calcium-independent. Functionally, receptor-like kinase involved in the control of pollen germination and pollen tube polar growth. Can phosphorylate ROPGEF1 in vitro. This chain is Pollen receptor-like kinase 3, found in Arabidopsis thaliana (Mouse-ear cress).